A 555-amino-acid chain; its full sequence is Phosphoglucomutase (555 aa).

2 residues coordinate alpha-D-glucose 1,6-bisphosphate: Arg-22 and Ser-114. The active-site Phosphoserine intermediate is Ser-114. Residues Ser-114, Asp-279, Asp-281, and Asp-283 each coordinate Mg(2+). Ser-114 is subject to Phosphoserine. Residues Asp-283, Arg-284, Thr-347, Glu-366, Ser-368, and Lys-379 each coordinate alpha-D-glucose 1,6-bisphosphate.

The protein belongs to the phosphohexose mutase family. Monomer. It depends on Mg(2+) as a cofactor.

The protein resides in the cytoplasm. The catalysed reaction is alpha-D-glucose 1-phosphate = alpha-D-glucose 6-phosphate. It carries out the reaction O-phospho-L-seryl-[protein] + alpha-D-glucose 1-phosphate = alpha-D-glucose 1,6-bisphosphate + L-seryl-[protein]. It catalyses the reaction alpha-D-glucose 1,6-bisphosphate + L-seryl-[protein] = O-phospho-L-seryl-[protein] + alpha-D-glucose 6-phosphate. In terms of biological role, catalyzes the reversible isomerization of alpha-D-glucose 1-phosphate to alpha-D-glucose 6-phosphate. The mechanism proceeds via the intermediate compound alpha-D-glucose 1,6-bisphosphate. Key enzyme in hexose metabolism. The reverse reaction is an essential step for biosynthesis because glucose 1-phosphate is the starting point for the synthesis of UDP-glucose, which acts as a precursor for the synthesis of oligosaccharides and trehalose. The protein is Phosphoglucomutase (pgmA) of Aspergillus oryzae (strain ATCC 42149 / RIB 40) (Yellow koji mold).